Here is a 220-residue protein sequence, read N- to C-terminus: Urease accessory protein UreF (220 aa).

It belongs to the UreF family. In terms of assembly, ureD, UreF and UreG form a complex that acts as a GTP-hydrolysis-dependent molecular chaperone, activating the urease apoprotein by helping to assemble the nickel containing metallocenter of UreC. The UreE protein probably delivers the nickel.

The protein localises to the cytoplasm. Functionally, required for maturation of urease via the functional incorporation of the urease nickel metallocenter. The polypeptide is Urease accessory protein UreF (Bordetella parapertussis (strain 12822 / ATCC BAA-587 / NCTC 13253)).